Here is a 348-residue protein sequence, read N- to C-terminus: Phospho-2-dehydro-3-deoxyheptonate aldolase, Trp-sensitive (348 aa).

It belongs to the class-I DAHP synthase family.

The catalysed reaction is D-erythrose 4-phosphate + phosphoenolpyruvate + H2O = 7-phospho-2-dehydro-3-deoxy-D-arabino-heptonate + phosphate. It participates in metabolic intermediate biosynthesis; chorismate biosynthesis; chorismate from D-erythrose 4-phosphate and phosphoenolpyruvate: step 1/7. In terms of biological role, stereospecific condensation of phosphoenolpyruvate (PEP) and D-erythrose-4-phosphate (E4P) giving rise to 3-deoxy-D-arabino-heptulosonate-7-phosphate (DAHP). In Buchnera aphidicola subsp. Schizaphis graminum (strain Sg), this protein is Phospho-2-dehydro-3-deoxyheptonate aldolase, Trp-sensitive (aroH).